A 141-amino-acid chain; its full sequence is Nucleoside diphosphate kinase (141 aa).

Residues K11, F59, R87, T93, R104, and N114 each coordinate ATP. H117 serves as the catalytic Pros-phosphohistidine intermediate.

Belongs to the NDK family. Homotetramer. Requires Mg(2+) as cofactor.

Its subcellular location is the cytoplasm. It catalyses the reaction a 2'-deoxyribonucleoside 5'-diphosphate + ATP = a 2'-deoxyribonucleoside 5'-triphosphate + ADP. It carries out the reaction a ribonucleoside 5'-diphosphate + ATP = a ribonucleoside 5'-triphosphate + ADP. In terms of biological role, major role in the synthesis of nucleoside triphosphates other than ATP. The ATP gamma phosphate is transferred to the NDP beta phosphate via a ping-pong mechanism, using a phosphorylated active-site intermediate. This Legionella pneumophila (strain Paris) protein is Nucleoside diphosphate kinase.